We begin with the raw amino-acid sequence, 173 residues long: Large ribosomal subunit protein uL10 (173 aa).

Belongs to the universal ribosomal protein uL10 family. In terms of assembly, part of the ribosomal stalk of the 50S ribosomal subunit. The N-terminus interacts with L11 and the large rRNA to form the base of the stalk. The C-terminus forms an elongated spine to which L12 dimers bind in a sequential fashion forming a multimeric L10(L12)X complex.

Its function is as follows. Forms part of the ribosomal stalk, playing a central role in the interaction of the ribosome with GTP-bound translation factors. The sequence is that of Large ribosomal subunit protein uL10 from Chlorobium phaeobacteroides (strain BS1).